A 142-amino-acid polypeptide reads, in one-letter code: Universal stress protein C (142 aa).

Belongs to the universal stress protein A family.

It is found in the cytoplasm. Its function is as follows. Required for resistance to DNA-damaging agents. This chain is Universal stress protein C (uspC), found in Escherichia coli O157:H7.